The following is a 339-amino-acid chain: Phosphoribosylformylglycinamidine cyclo-ligase (339 aa).

This sequence belongs to the AIR synthase family.

It localises to the cytoplasm. The catalysed reaction is 2-formamido-N(1)-(5-O-phospho-beta-D-ribosyl)acetamidine + ATP = 5-amino-1-(5-phospho-beta-D-ribosyl)imidazole + ADP + phosphate + H(+). It participates in purine metabolism; IMP biosynthesis via de novo pathway; 5-amino-1-(5-phospho-D-ribosyl)imidazole from N(2)-formyl-N(1)-(5-phospho-D-ribosyl)glycinamide: step 2/2. This chain is Phosphoribosylformylglycinamidine cyclo-ligase, found in Desulfitobacterium hafniense (strain DSM 10664 / DCB-2).